The primary structure comprises 1907 residues: Chromatin modification-related protein EAF1 B (1907 aa).

Disordered regions lie at residues 108 to 208 (ASPH…TDLV), 261 to 287 (NRVS…GSKT), 323 to 373 (GGSP…SHAN), and 449 to 469 (NQSH…ETEK). Positions 140-151 (SENKSVEGERNL) are enriched in basic and acidic residues. 3 stretches are compositionally biased toward polar residues: residues 261–270 (NRVSSNSLNT), 333–342 (GQKNSSTQLN), and 355–372 (TNRG…SSHA). Positions 563-641 (CGTAPVEVRE…LSYAILQFWS (79 aa)) constitute an HSA domain. Disordered regions lie at residues 836 to 909 (SSSL…AVQK) and 928 to 952 (AETS…TWHL). A compositionally biased stretch (basic residues) spans 856–866 (RRVRTASRHRV). 2 stretches are compositionally biased toward polar residues: residues 884–898 (TDAS…QDEY) and 942–952 (QGSAYDQTWHL). The SANT domain maps to 1049–1105 (SGNPWSLFEDQALVVLVHDMGPNWELISDAMNSTLKIKYIYRNPTECKDRHKILMDK). Disordered regions lie at residues 1107 to 1131 (AGDG…PGIP), 1235 to 1266 (PVLP…GLQS), 1296 to 1319 (LSGR…DRGH), 1429 to 1465 (GHLS…QQEA), 1477 to 1594 (YLQQ…QQLN), 1638 to 1703 (VRPD…SPAT), 1767 to 1791 (VPQS…QASN), and 1824 to 1907 (VNNS…TKVE). Polar residues-rich tracts occupy residues 1116-1125 (DSGNSQSYPS), 1242-1266 (AHPS…GLQS), 1296-1310 (LSGR…STPA), 1431-1444 (LSQQ…SHVL), and 1453-1462 (QSPSQATGAQ). A compositionally biased stretch (low complexity) spans 1493-1512 (PHVQQPQGSSVSSSSQNSPQ). Residues 1513 to 1529 (TQPPVSPQPLSMPPVSP) show a composition bias toward pro residues. Composition is skewed to polar residues over residues 1532–1545 (NINA…QKSQ), 1554–1568 (SPQS…QAGK), 1585–1594 (RQPTQGQQLN), 1640–1655 (PDQQ…TDLQ), 1662–1672 (PLSSNHSQQLP), 1681–1703 (PSPQ…SPAT), 1769–1782 (QSVT…SMGT), and 1824–1844 (VNNS…NQGL). Composition is skewed to basic and acidic residues over residues 1863 to 1872 (SEEKRPKLPE) and 1882 to 1892 (LASEEQPHLEE).

It belongs to the EAF1 family. In terms of assembly, component of the NuA4 histone acetyltransferase complex. Interacts with ARP4 and SWC4, and (via HSA domain) with TAF14 and TAF14B. Expressed in leaves.

The protein resides in the nucleus. Its function is as follows. Component of the NuA4 histone acetyltransferase complex which is involved in transcriptional activation of selected genes principally by acetylation of nucleosomal histone H4 and H2A. In Arabidopsis thaliana (Mouse-ear cress), this protein is Chromatin modification-related protein EAF1 B (EAF1B).